The primary structure comprises 241 residues: Pyridoxal phosphate phosphatase PHOSPHO2 (241 aa).

Asp8 serves as the catalytic Nucleophile. 2 residues coordinate Mg(2+): Asp8 and Asp10. Asp10 acts as the Proton donor in catalysis. Asp19 and Asp99 together coordinate substrate. Asp179 contributes to the Mg(2+) binding site.

The protein belongs to the HAD-like hydrolase superfamily. PHOSPHO family. Mg(2+) is required as a cofactor.

The enzyme catalyses pyridoxal 5'-phosphate + H2O = pyridoxal + phosphate. In terms of biological role, phosphatase that has high activity toward pyridoxal 5'-phosphate (PLP). Also active at much lower level toward pyrophosphate, phosphoethanolamine (PEA), phosphocholine (PCho), phospho-l-tyrosine, fructose-6-phosphate, p-nitrophenyl phosphate, and h-glycerophosphate. The protein is Pyridoxal phosphate phosphatase PHOSPHO2 (PHOSPHO2) of Bos taurus (Bovine).